Consider the following 697-residue polypeptide: Putative flagellar export/assembly protein LfhA (697 aa).

Transmembrane regions (helical) follow at residues 19–39 (VPLV…PALL), 40–60 (DILF…AVSA), 66–86 (FSLF…LNVA), 116–136 (GNFV…FIVV), 204–224 (AIAG…IGIF), 242–262 (IGDG…AAII), and 280–302 (LLAS…VVPG).

Belongs to the FHIPEP (flagella/HR/invasion proteins export pore) family.

The protein resides in the cell inner membrane. Functionally, part of the flagellar gene cluster Flag-2. However, the Flag-2 flagellar system could be inactive in strain 042 due to a frameshift in lfgC. The sequence is that of Putative flagellar export/assembly protein LfhA from Escherichia coli O44:H18 (strain 042 / EAEC).